The primary structure comprises 280 residues: 4-deoxy-L-threo-5-hexosulose-uronate ketol-isomerase (280 aa).

Residues His-198, His-200, Glu-205, and His-247 each coordinate Zn(2+).

It belongs to the KduI family. It depends on Zn(2+) as a cofactor.

The enzyme catalyses 5-dehydro-4-deoxy-D-glucuronate = 3-deoxy-D-glycero-2,5-hexodiulosonate. Its pathway is glycan metabolism; pectin degradation; 2-dehydro-3-deoxy-D-gluconate from pectin: step 4/5. In terms of biological role, catalyzes the isomerization of 5-dehydro-4-deoxy-D-glucuronate to 3-deoxy-D-glycero-2,5-hexodiulosonate. This is 4-deoxy-L-threo-5-hexosulose-uronate ketol-isomerase from Lachnospira eligens (strain ATCC 27750 / DSM 3376 / VPI C15-48 / C15-B4) (Eubacterium eligens).